The sequence spans 159 residues: Transcription elongation factor GreA (159 aa).

Residues 47-77 (SENAEYDAARDKQATIENEITEIQHILDNYE) adopt a coiled-coil conformation.

It belongs to the GreA/GreB family.

In terms of biological role, necessary for efficient RNA polymerase transcription elongation past template-encoded arresting sites. The arresting sites in DNA have the property of trapping a certain fraction of elongating RNA polymerases that pass through, resulting in locked ternary complexes. Cleavage of the nascent transcript by cleavage factors such as GreA or GreB allows the resumption of elongation from the new 3'terminus. GreA releases sequences of 2 to 3 nucleotides. This Metamycoplasma arthritidis (strain 158L3-1) (Mycoplasma arthritidis) protein is Transcription elongation factor GreA.